We begin with the raw amino-acid sequence, 484 residues long: Protein arginine methyltransferase NDUFAF7 homolog, mitochondrial (484 aa).

A mitochondrion-targeting transit peptide spans 1–12 (MFRSITQRVIRN).

The protein belongs to the NDUFAF7 family. Homodimer. Interacts with ndufs2.

It is found in the mitochondrion. The enzyme catalyses L-arginyl-[protein] + 2 S-adenosyl-L-methionine = N(omega),N(omega)'-dimethyl-L-arginyl-[protein] + 2 S-adenosyl-L-homocysteine + 2 H(+). In terms of biological role, involved in the assembly or stability of mitochondrial NADH:ubiquinone oxidoreductase complex (complex I). Acts as an arginine methyltransferase and probably acts by mediating arginine methylation of ndufs2. The chain is Protein arginine methyltransferase NDUFAF7 homolog, mitochondrial from Dictyostelium discoideum (Social amoeba).